A 219-amino-acid chain; its full sequence is Cytidylate kinase (219 aa).

ATP is bound at residue 11 to 19 (GTAGSGKTA).

The protein belongs to the cytidylate kinase family. Type 1 subfamily.

The protein localises to the cytoplasm. It catalyses the reaction CMP + ATP = CDP + ADP. The catalysed reaction is dCMP + ATP = dCDP + ADP. This chain is Cytidylate kinase, found in Mesoplasma florum (strain ATCC 33453 / NBRC 100688 / NCTC 11704 / L1) (Acholeplasma florum).